The following is a 575-amino-acid chain: uncharacterized protein (575 aa).

6 consecutive transmembrane segments (helical) span residues Phe-16 to Ile-36, Trp-50 to Leu-70, Pro-132 to Ile-152, Trp-154 to Phe-174, Ile-243 to Val-263, and Ile-264 to Phe-284. Residues Phe-16–Arg-299 enclose the ABC transmembrane type-1 domain. The 235-residue stretch at Ile-333–Ala-567 folds into the ABC transporter domain. Gly-366–Ser-373 lines the ATP pocket.

This sequence belongs to the ABC transporter superfamily.

It is found in the cell membrane. The protein localises to the membrane raft. This is an uncharacterized protein from Bacillus subtilis (strain 168).